A 207-amino-acid polypeptide reads, in one-letter code: Imidazole glycerol phosphate synthase subunit HisH (207 aa).

Positions 1–206 (MMIVIDYDAG…KEYVYENTAR (206 aa)) constitute a Glutamine amidotransferase type-1 domain. Cys79 functions as the Nucleophile in the catalytic mechanism. Active-site residues include His181 and Glu183.

As to quaternary structure, heterodimer of HisH and HisF.

The protein resides in the cytoplasm. It carries out the reaction 5-[(5-phospho-1-deoxy-D-ribulos-1-ylimino)methylamino]-1-(5-phospho-beta-D-ribosyl)imidazole-4-carboxamide + L-glutamine = D-erythro-1-(imidazol-4-yl)glycerol 3-phosphate + 5-amino-1-(5-phospho-beta-D-ribosyl)imidazole-4-carboxamide + L-glutamate + H(+). The enzyme catalyses L-glutamine + H2O = L-glutamate + NH4(+). It participates in amino-acid biosynthesis; L-histidine biosynthesis; L-histidine from 5-phospho-alpha-D-ribose 1-diphosphate: step 5/9. IGPS catalyzes the conversion of PRFAR and glutamine to IGP, AICAR and glutamate. The HisH subunit catalyzes the hydrolysis of glutamine to glutamate and ammonia as part of the synthesis of IGP and AICAR. The resulting ammonia molecule is channeled to the active site of HisF. This Streptococcus sanguinis (strain SK36) protein is Imidazole glycerol phosphate synthase subunit HisH.